Reading from the N-terminus, the 87-residue chain is Small ribosomal subunit protein uS15 (87 aa).

This sequence belongs to the universal ribosomal protein uS15 family. As to quaternary structure, part of the 30S ribosomal subunit. Forms a bridge to the 50S subunit in the 70S ribosome, contacting the 23S rRNA.

Its function is as follows. One of the primary rRNA binding proteins, it binds directly to 16S rRNA where it helps nucleate assembly of the platform of the 30S subunit by binding and bridging several RNA helices of the 16S rRNA. Forms an intersubunit bridge (bridge B4) with the 23S rRNA of the 50S subunit in the ribosome. The sequence is that of Small ribosomal subunit protein uS15 from Ruminiclostridium cellulolyticum (strain ATCC 35319 / DSM 5812 / JCM 6584 / H10) (Clostridium cellulolyticum).